The following is a 592-amino-acid chain: Frizzled-5 (592 aa).

The N-terminal stretch at 1 to 38 is a signal peptide; the sequence is MRKPADEHHFTMETSGMHLVGFWLHVLLLFQLSGLGDS. Residues 39-248 are Extracellular-facing; the sequence is ASKDIVCEPI…QDERTFTTFW (210 aa). In terms of domain architecture, FZ spans 40–161; it reads SKDIVCEPIT…GDTDRLCMDR (122 aa). 5 disulfides stabilise this stretch: Cys45-Cys106, Cys53-Cys99, Cys90-Cys128, Cys117-Cys158, and Cys121-Cys145. A disordered region spans residues 162-192; it reads NSSETTTLSPPFPKPTPKGTPRHRATAKSAP. A helical transmembrane segment spans residues 249-269; that stretch reads IGLWSVLCFVSTFTTVATFLI. At 270–280 the chain is on the cytoplasmic side; sequence DMERFKYPERP. The chain crosses the membrane as a helical span at residues 281–301; it reads IIFLAACYLFVSLGYIVRLLA. At 302–327 the chain is on the extracellular side; the sequence is GHERVACEGTGDQQHILYDTTGPALC. Residues 328–348 traverse the membrane as a helical segment; it reads TLVFLLIYFFGMASSIWWVVL. Over 349–370 the chain is Cytoplasmic; the sequence is SFTWFLAAGMKWGNEAIAGYSQ. A helical membrane pass occupies residues 371 to 391; the sequence is YFHLAAWLVPSVKSIAVLALS. Residues 392 to 414 lie on the Extracellular side of the membrane; it reads SVDGDPVAGICYVGNQSLEGLRG. A helical membrane pass occupies residues 415–435; the sequence is FVLAPLVVYLFTGSLFLLAGF. The Cytoplasmic segment spans residues 436-461; the sequence is VSLFRIRSVIKQGGTKTDKLEKLMIR. The helical transmembrane segment at 462-482 threads the bilayer; the sequence is IGLFTVLYTVPATIVVACLVY. Over 483–512 the chain is Extracellular; sequence EQHYRPSWERALACSCPSERQRLGMGPDYA. Residues 513–533 traverse the membrane as a helical segment; sequence VFMLKYFMCLVVGITSGVWIW. At 534–592 the chain is on the cytoplasmic side; sequence SGKTLESWRRFIARYVPCRTRKPPVSASSMYSEASTALTARAGTAPTGTYHKSAPSSHV.

Belongs to the G-protein coupled receptor Fz/Smo family.

Its subcellular location is the cell membrane. The protein localises to the golgi apparatus membrane. It localises to the synapse. It is found in the perikaryon. The protein resides in the cell projection. Its subcellular location is the dendrite. The protein localises to the axon. Receptor for Wnt proteins. Following binding, activates the canonical Wnt/beta-catenin signaling pathway. Also activates wnt non-canonical signaling. In neurons, activation of the Wnt pathway promotes formation of synapses. May be involved in transduction and intercellular transmission of polarity information during tissue morphogenesis and/or in differentiated tissues. Plays a role in early eye development, possibly through wnt non-canonical signaling. As a receptor for wnt11, promotes eye formation, at least partially, by antagonizing the Wnt/beta-catenin pathway. In addition, promotes coherence of eye field cells, potentially contributing to the coordinated morphogenetic behaviors of cells in the nascent eye field. The chain is Frizzled-5 (fzd5) from Danio rerio (Zebrafish).